The sequence spans 396 residues: L-lactate dehydrogenase (396 aa).

Residues Met-1–Gly-380 form the FMN hydroxy acid dehydrogenase domain. Substrate is bound at residue Tyr-24. Positions 106 and 127 each coordinate FMN. Substrate is bound at residue Tyr-129. Thr-155 contributes to the FMN binding site. Position 164 (Arg-164) interacts with substrate. Lys-251 contributes to the FMN binding site. The active-site Proton acceptor is His-275. Position 278 (Arg-278) interacts with substrate. Asp-306–Arg-330 serves as a coordination point for FMN.

Belongs to the FMN-dependent alpha-hydroxy acid dehydrogenase family. FMN is required as a cofactor.

Its subcellular location is the cell inner membrane. The catalysed reaction is (S)-lactate + A = pyruvate + AH2. In terms of biological role, catalyzes the conversion of L-lactate to pyruvate. Is coupled to the respiratory chain. In Salmonella heidelberg (strain SL476), this protein is L-lactate dehydrogenase.